The following is a 157-amino-acid chain: MSHPDLNKLLELWPHIQEYQDLALKHGINDIFQDNGGKLLQVLLITGLTVLPGREGNDAVDNAGQEYELKSINIDLTKGFSTHHHMNPVIIAKYRQVPWIFAIYRGIAIEAIYRLEPKDLEFYYDKWERKWYSDGHKDINNPKIPVKYVMEHGTKIY.

Residues Asp58 and Glu68 each coordinate Mg(2+).

As to quaternary structure, homodimer. The cofactor is Mg(2+).

The enzyme catalyses Endonucleolytic cleavage of DNA to give specific double-stranded fragments with terminal 5'-phosphates.. In terms of biological role, a P subtype restriction enzyme that recognizes the double-stranded sequence 5'-CAGCTG-3' and cleaves after G-3. The polypeptide is Type II restriction enzyme PvuII (pvuIIR) (Proteus hauseri).